We begin with the raw amino-acid sequence, 802 residues long: Oligophrenin-1 (802 aa).

In terms of domain architecture, PH spans 265 to 368; it reads QPTIEGYLYT…WMEAMDGKEP (104 aa). The Rho-GAP domain maps to 380–564; the sequence is MELNEVGFKF…ILIEHFGKIY (185 aa). Disordered stretches follow at residues 569 to 589, 607 to 770, and 783 to 802; these read EESAAPPVPPPRVTARRHKPI, LDES…NAGE, and FETASRKTGSSQGRLPGDES. The span at 616–627 shows a compositional bias: polar residues; the sequence is HQTPNGTITSSI. The span at 716–732 shows a compositional bias: basic and acidic residues; that stretch reads HHKEGDADSFSKVRPPG.

As to quaternary structure, interacts with HOMER1. Interacts with AMPA receptor complexes. Interacts with SH3GL2 (endophilin-A1). Interacts (via C-terminus) with NR1D1.

Its subcellular location is the postsynapse. It localises to the presynapse. The protein localises to the cell projection. It is found in the axon. The protein resides in the dendritic spine. Its subcellular location is the dendrite. It localises to the cytoplasm. Its function is as follows. Stimulates GTP hydrolysis of members of the Rho family. Its action on RHOA activity and signaling is implicated in growth and stabilization of dendritic spines, and therefore in synaptic function. Critical for the stabilization of AMPA receptors at postsynaptic sites. Critical for the regulation of synaptic vesicle endocytosis at pre-synaptic terminals. Required for the localization of NR1D1 to dendrites, can suppress its repressor activity and protect it from proteasomal degradation. The polypeptide is Oligophrenin-1 (OPHN1) (Pan troglodytes (Chimpanzee)).